Reading from the N-terminus, the 898-residue chain is Endoplasmic reticulum metallopeptidase 1 (898 aa).

Met1 is modified (N-acetylmethionine). The interval 1–59 (MEWSSESAAVRRHRGTAERREGQAAASHPQREASAQEDARGGGRMRGRTESGGESRGAK) is disordered. Topologically, residues 1–66 (MEWSSESAAV…GAKTALSEAR (66 aa)) are cytoplasmic. Basic and acidic residues predominate over residues 37–57 (EDARGGGRMRGRTESGGESRG). The chain crosses the membrane as a helical span at residues 67 to 87 (TALALALYLLALRALVQLSLQ). Residues 88 to 393 (RLVLSRTSGL…SSSEYRHGSM (306 aa)) lie on the Lumenal side of the membrane. Asn176 is a glycosylation site (N-linked (GlcNAc...) asparagine). Residues Cys198 and Cys216 are joined by a disulfide bond. Residues His199 and Asp211 each coordinate Zn(2+). Catalysis depends on Glu245, which acts as the Proton acceptor. Residues Glu246, Glu272, and His348 each contribute to the Zn(2+) site. Residues 394–414 (VFFDVLGLLVIAYPSRVGSII) form a helical membrane-spanning segment. The Cytoplasmic segment spans residues 415 to 451 (NYMVVMAVVLYLGRKLLRPNHSNSNYVRDFLCGLGIT). A helical transmembrane segment spans residues 452–472 (FISWFTSLVTVLIIAVFVSLI). Over 473 to 480 (GQSLSWYN) the chain is Lumenal. Residues 481 to 501 (YFYIAVCLYGTATVAKIILIH) traverse the membrane as a helical segment. Over 502-515 (TLAKRFYYVNASDL) the chain is Cytoplasmic. A helical transmembrane segment spans residues 516 to 538 (YLGELFFDTSLFVHCGFLVALTA). Over 539–542 (QGFC) the chain is Lumenal. Residues 543–562 (SAFMSAVWVAFPLLTKLCVY) traverse the membrane as a helical segment. At 563 to 573 (KDFKKHGAKGR) the chain is on the cytoplasmic side. A helical transmembrane segment spans residues 574 to 594 (FIALYLLGMFIPYLYGLYLIW). The Lumenal portion of the chain corresponds to 595–615 (AVFEMFTPILGRSGSEIPPDV). A helical transmembrane segment spans residues 616-636 (VLASILAVCVMILSSYFITFI). Topologically, residues 637-645 (YLVNSTKKT) are cytoplasmic. A helical membrane pass occupies residues 646 to 666 (ILTLILVCAVTFLLVCSGAFF). Residues 667–898 (PYSSNPDSPK…WVSTYSLFVF (232 aa)) are Lumenal-facing. Residue Asn724 is glycosylated (N-linked (GlcNAc...) asparagine).

The protein belongs to the peptidase M28 family. Requires Zn(2+) as cofactor. In terms of tissue distribution, widely expressed, with highest levels in ovary, kidney, hypothalamus and hippocampus. Within the ovarian follicle, expressed in granulosa cells, but not in oocytes. Present in both preantral and antral follicles, but not in atretic antral follicle.

The protein resides in the endoplasmic reticulum membrane. Functionally, within the ovary, required for the organization of somatic cells and oocytes into discrete follicular structures. The sequence is that of Endoplasmic reticulum metallopeptidase 1 from Rattus norvegicus (Rat).